A 321-amino-acid chain; its full sequence is Probable arabinan endo-1,5-alpha-L-arabinosidase C (321 aa).

Residues 1 to 18 (MYLYTLILLFLASANVNA) form the signal peptide. D33 acts as the Proton acceptor in catalysis. N192 carries an N-linked (GlcNAc...) asparagine glycan. The Proton donor role is filled by E200. The N-linked (GlcNAc...) asparagine glycan is linked to N224.

The protein belongs to the glycosyl hydrolase 43 family.

It is found in the secreted. It carries out the reaction Endohydrolysis of (1-&gt;5)-alpha-arabinofuranosidic linkages in (1-&gt;5)-arabinans.. The protein operates within glycan metabolism; L-arabinan degradation. Endo-1,5-alpha-L-arabinanase involved in degradation of pectin. Its preferred substrate is linear 1,5-alpha-L-arabinan. In Aspergillus fumigatus (strain CBS 144.89 / FGSC A1163 / CEA10) (Neosartorya fumigata), this protein is Probable arabinan endo-1,5-alpha-L-arabinosidase C (abnC).